A 394-amino-acid chain; its full sequence is Probable fatty acyl-CoA transferase Rv3272 (394 aa).

Asp-175 (nucleophile) is an active-site residue.

This sequence belongs to the CoA-transferase III family. In terms of assembly, homodimer.

Probably involved in fatty acid metabolism. Binds to fatty acyl-CoAs of varying carbon chain lengths, with the highest binding affinity for palmitoyl-CoA (C16:0). In vitro, alters the cell wall lipid profile and protects mycobacteria from acidic, oxidative and antibiotic stress. May play a significant role in host-pathogen interaction. This is Probable fatty acyl-CoA transferase Rv3272 from Mycobacterium tuberculosis (strain ATCC 25618 / H37Rv).